The following is a 199-amino-acid chain: CASP-like protein 4C1 (199 aa).

Topologically, residues 1-35 are cytoplasmic; sequence MESGSVANDSGPLNSTPDVHLYGKTAAMKQRRSNT. The helical transmembrane segment at 36–56 threads the bilayer; that stretch reads MLFVFRLLTFSFSLAAVLVMG. The Extracellular segment spans residues 57-80; sequence TNKQKIRSAPQYLEVAWHDFDPFR. A helical membrane pass occupies residues 81–101; sequence YVFAVNAIICVYSFVETWLAV. Residues 102–124 are Cytoplasmic-facing; sequence YTLSRGTLLLPETFQVWFDYGHD. The helical transmembrane segment at 125–145 threads the bilayer; it reads QGFACLLFSANSVGIAMAQLL. Topologically, residues 146-169 are extracellular; the sequence is QSGSTLIQGQYYCSDAGAYCTQAR. Residues 170–190 form a helical membrane-spanning segment; sequence VSIAMGFGAFLFLALSSFLTG. The Cytoplasmic portion of the chain corresponds to 191 to 199; sequence LRVARWYLP.

The protein belongs to the Casparian strip membrane proteins (CASP) family. In terms of assembly, homodimer and heterodimers.

It localises to the cell membrane. The polypeptide is CASP-like protein 4C1 (Physcomitrium patens (Spreading-leaved earth moss)).